Consider the following 474-residue polypeptide: tRNA modification GTPase MnmE (474 aa).

Positions 35, 92, and 135 each coordinate (6S)-5-formyl-5,6,7,8-tetrahydrofolate. The TrmE-type G domain occupies 231 to 396 (GLHVVLAGQP…LRAALLEIAG (166 aa)). Asn-241 lines the K(+) pocket. Residues 241–246 (NVGKSS), 260–266 (TPIAGTT), 285–288 (DTAG), and 377–379 (SAR) each bind GTP. Ser-245 is a binding site for Mg(2+). Thr-260, Ile-262, and Thr-265 together coordinate K(+). Thr-266 contributes to the Mg(2+) binding site. Lys-474 is a binding site for (6S)-5-formyl-5,6,7,8-tetrahydrofolate.

The protein belongs to the TRAFAC class TrmE-Era-EngA-EngB-Septin-like GTPase superfamily. TrmE GTPase family. Homodimer. Heterotetramer of two MnmE and two MnmG subunits. K(+) serves as cofactor.

The protein localises to the cytoplasm. Exhibits a very high intrinsic GTPase hydrolysis rate. Involved in the addition of a carboxymethylaminomethyl (cmnm) group at the wobble position (U34) of certain tRNAs, forming tRNA-cmnm(5)s(2)U34. The polypeptide is tRNA modification GTPase MnmE (Ralstonia nicotianae (strain ATCC BAA-1114 / GMI1000) (Ralstonia solanacearum)).